The primary structure comprises 240 residues: ATP-dependent Clp protease proteolytic subunit 2 (240 aa).

The Nucleophile role is filled by Ser-132. The active site involves His-157.

Belongs to the peptidase S14 family. Fourteen ClpP subunits assemble into 2 heptameric rings which stack back to back to give a disk-like structure with a central cavity, resembling the structure of eukaryotic proteasomes.

The protein resides in the cytoplasm. The enzyme catalyses Hydrolysis of proteins to small peptides in the presence of ATP and magnesium. alpha-casein is the usual test substrate. In the absence of ATP, only oligopeptides shorter than five residues are hydrolyzed (such as succinyl-Leu-Tyr-|-NHMec, and Leu-Tyr-Leu-|-Tyr-Trp, in which cleavage of the -Tyr-|-Leu- and -Tyr-|-Trp bonds also occurs).. In terms of biological role, cleaves peptides in various proteins in a process that requires ATP hydrolysis. Has a chymotrypsin-like activity. Plays a major role in the degradation of misfolded proteins. This is ATP-dependent Clp protease proteolytic subunit 2 from Synechococcus elongatus (strain ATCC 33912 / PCC 7942 / FACHB-805) (Anacystis nidulans R2).